The following is a 464-amino-acid chain: Siroheme synthase (464 aa).

The interval 1-203 (MEFLPLFHNL…GQGAEAERLL (203 aa)) is precorrin-2 dehydrogenase /sirohydrochlorin ferrochelatase. NAD(+)-binding positions include 22 to 23 (EI) and 43 to 44 (PE). S128 is subject to Phosphoserine. Positions 216–464 (GEVYLVGAGP…AWFEGAQATL (249 aa)) are uroporphyrinogen-III C-methyltransferase. S-adenosyl-L-methionine is bound at residue P225. The active-site Proton acceptor is D248. K270 (proton donor) is an active-site residue. Residues 301-303 (GGD), I306, 331-332 (TA), M383, and G412 each bind S-adenosyl-L-methionine.

This sequence in the N-terminal section; belongs to the precorrin-2 dehydrogenase / sirohydrochlorin ferrochelatase family. The protein in the C-terminal section; belongs to the precorrin methyltransferase family.

The enzyme catalyses uroporphyrinogen III + 2 S-adenosyl-L-methionine = precorrin-2 + 2 S-adenosyl-L-homocysteine + H(+). It catalyses the reaction precorrin-2 + NAD(+) = sirohydrochlorin + NADH + 2 H(+). It carries out the reaction siroheme + 2 H(+) = sirohydrochlorin + Fe(2+). It participates in cofactor biosynthesis; adenosylcobalamin biosynthesis; precorrin-2 from uroporphyrinogen III: step 1/1. Its pathway is cofactor biosynthesis; adenosylcobalamin biosynthesis; sirohydrochlorin from precorrin-2: step 1/1. The protein operates within porphyrin-containing compound metabolism; siroheme biosynthesis; precorrin-2 from uroporphyrinogen III: step 1/1. It functions in the pathway porphyrin-containing compound metabolism; siroheme biosynthesis; siroheme from sirohydrochlorin: step 1/1. It participates in porphyrin-containing compound metabolism; siroheme biosynthesis; sirohydrochlorin from precorrin-2: step 1/1. Its function is as follows. Multifunctional enzyme that catalyzes the SAM-dependent methylations of uroporphyrinogen III at position C-2 and C-7 to form precorrin-2 via precorrin-1. Then it catalyzes the NAD-dependent ring dehydrogenation of precorrin-2 to yield sirohydrochlorin. Finally, it catalyzes the ferrochelation of sirohydrochlorin to yield siroheme. In Pseudomonas syringae pv. tomato (strain ATCC BAA-871 / DC3000), this protein is Siroheme synthase.